The primary structure comprises 306 residues: Tyrosine recombinase XerC (306 aa).

In terms of domain architecture, Core-binding (CB) spans 1–90 (MYVHIDNFLV…AWRSFYRYLY (90 aa)). The Tyr recombinase domain maps to 111–298 (RLPRFLYEDE…TGERLKKVYR (188 aa)). Active-site residues include Arg-151, Lys-175, His-250, Arg-253, and His-276. Tyr-285 serves as the catalytic O-(3'-phospho-DNA)-tyrosine intermediate.

Belongs to the 'phage' integrase family. XerC subfamily. As to quaternary structure, forms a cyclic heterotetrameric complex composed of two molecules of XerC and two molecules of XerD.

Its subcellular location is the cytoplasm. In terms of biological role, site-specific tyrosine recombinase, which acts by catalyzing the cutting and rejoining of the recombining DNA molecules. The XerC-XerD complex is essential to convert dimers of the bacterial chromosome into monomers to permit their segregation at cell division. It also contributes to the segregational stability of plasmids. The polypeptide is Tyrosine recombinase XerC (Pelotomaculum thermopropionicum (strain DSM 13744 / JCM 10971 / SI)).